The primary structure comprises 181 residues: ATP-dependent protease subunit HslV (181 aa).

The active site involves Thr7. Positions 166, 169, and 172 each coordinate Na(+).

It belongs to the peptidase T1B family. HslV subfamily. In terms of assembly, a double ring-shaped homohexamer of HslV is capped on each side by a ring-shaped HslU homohexamer. The assembly of the HslU/HslV complex is dependent on binding of ATP.

It is found in the cytoplasm. It carries out the reaction ATP-dependent cleavage of peptide bonds with broad specificity.. With respect to regulation, allosterically activated by HslU binding. Functionally, protease subunit of a proteasome-like degradation complex believed to be a general protein degrading machinery. The chain is ATP-dependent protease subunit HslV from Variovorax paradoxus (strain S110).